Reading from the N-terminus, the 439-residue chain is ATP-dependent protease ATPase subunit HslU (439 aa).

Residues isoleucine 17, 59-64 (GVGKTE), aspartate 251, glutamate 317, and arginine 389 contribute to the ATP site.

This sequence belongs to the ClpX chaperone family. HslU subfamily. As to quaternary structure, a double ring-shaped homohexamer of HslV is capped on each side by a ring-shaped HslU homohexamer. The assembly of the HslU/HslV complex is dependent on binding of ATP.

It localises to the cytoplasm. In terms of biological role, ATPase subunit of a proteasome-like degradation complex; this subunit has chaperone activity. The binding of ATP and its subsequent hydrolysis by HslU are essential for unfolding of protein substrates subsequently hydrolyzed by HslV. HslU recognizes the N-terminal part of its protein substrates and unfolds these before they are guided to HslV for hydrolysis. The polypeptide is ATP-dependent protease ATPase subunit HslU (Campylobacter jejuni subsp. jejuni serotype O:6 (strain 81116 / NCTC 11828)).